The primary structure comprises 155 residues: Ribosome maturation factor RimP (155 aa).

This sequence belongs to the RimP family.

It localises to the cytoplasm. In terms of biological role, required for maturation of 30S ribosomal subunits. In Salinibacter ruber (strain DSM 13855 / M31), this protein is Ribosome maturation factor RimP.